Here is a 142-residue protein sequence, read N- to C-terminus: Protein archease (142 aa).

Asp12 and Asp141 together coordinate Ca(2+).

The protein belongs to the archease family.

Functionally, activates the tRNA-splicing ligase complex by facilitating the enzymatic turnover of catalytic subunit RtcB. Acts by promoting the guanylylation of RtcB, a key intermediate step in tRNA ligation. Can also alter the NTP specificity of RtcB such that ATP, dGTP or ITP is used efficiently. The polypeptide is Protein archease (Thermococcus kodakarensis (strain ATCC BAA-918 / JCM 12380 / KOD1) (Pyrococcus kodakaraensis (strain KOD1))).